Consider the following 455-residue polypeptide: Cysteine--tRNA ligase (455 aa).

Cysteine 28 provides a ligand contact to Zn(2+). Positions 30–40 (MTVYDYCHLGH) match the 'HIGH' region motif. Residues cysteine 209, histidine 234, and glutamate 238 each contribute to the Zn(2+) site. Residues 266–270 (KMSKS) carry the 'KMSKS' region motif. Lysine 269 lines the ATP pocket.

The protein belongs to the class-I aminoacyl-tRNA synthetase family. Monomer. Requires Zn(2+) as cofactor.

The protein resides in the cytoplasm. It carries out the reaction tRNA(Cys) + L-cysteine + ATP = L-cysteinyl-tRNA(Cys) + AMP + diphosphate. The chain is Cysteine--tRNA ligase from Methylobacillus flagellatus (strain ATCC 51484 / DSM 6875 / VKM B-1610 / KT).